We begin with the raw amino-acid sequence, 105 residues long: UPF0235 protein A1E_05380 (105 aa).

It belongs to the UPF0235 family.

This Rickettsia canadensis (strain McKiel) protein is UPF0235 protein A1E_05380.